The primary structure comprises 254 residues: Glutathione S-transferase F14 (254 aa).

Residues 4–85 enclose the GST N-terminal domain; sequence SKMKLHCGFI…YLAEQYKDVG (82 aa). Glutathione contacts are provided by residues 42 to 43, 56 to 57, and 69 to 70; these read AK, EV, and EP. Residues 92 to 231 form the GST C-terminal domain; that stretch reads DPKKRAIMSM…DLMKQRRLPI (140 aa).

This sequence belongs to the GST superfamily. Phi family.

The protein localises to the cytoplasm. It is found in the cytosol. It catalyses the reaction RX + glutathione = an S-substituted glutathione + a halide anion + H(+). Functionally, may be involved in the conjugation of reduced glutathione to a wide number of exogenous and endogenous hydrophobic electrophiles and have a detoxification role against certain herbicides. The sequence is that of Glutathione S-transferase F14 from Arabidopsis thaliana (Mouse-ear cress).